Here is a 393-residue protein sequence, read N- to C-terminus: Riboflavin biosynthesis protein RibBA (393 aa).

The segment at 1–200 (MQLDSIDTAL…IEDLEKYRKS (200 aa)) is DHBP synthase. Residues 27-28 (RE), Asp32, 139-143 (RRGHT), and Glu163 contribute to the D-ribulose 5-phosphate site. Glu28 contacts Mg(2+). Residue His142 coordinates Mg(2+). The segment at 201–393 (SISKLDAKAK…TKKEKMGHLI (193 aa)) is GTP cyclohydrolase II. Position 249–253 (249–253 (RIHSA)) interacts with GTP. The Zn(2+) site is built by Cys254, Cys265, and Cys267. GTP is bound by residues Gln270, 291–293 (EGR), and Thr313. The active-site Proton acceptor; for GTP cyclohydrolase activity is Asp325. The Nucleophile; for GTP cyclohydrolase activity role is filled by Arg327. Ser348 and Lys353 together coordinate GTP.

It in the N-terminal section; belongs to the DHBP synthase family. The protein in the C-terminal section; belongs to the GTP cyclohydrolase II family. It depends on Mg(2+) as a cofactor. Mn(2+) serves as cofactor. Requires Zn(2+) as cofactor.

It carries out the reaction D-ribulose 5-phosphate = (2S)-2-hydroxy-3-oxobutyl phosphate + formate + H(+). The enzyme catalyses GTP + 4 H2O = 2,5-diamino-6-hydroxy-4-(5-phosphoribosylamino)-pyrimidine + formate + 2 phosphate + 3 H(+). The protein operates within cofactor biosynthesis; riboflavin biosynthesis; 2-hydroxy-3-oxobutyl phosphate from D-ribulose 5-phosphate: step 1/1. It functions in the pathway cofactor biosynthesis; riboflavin biosynthesis; 5-amino-6-(D-ribitylamino)uracil from GTP: step 1/4. Its function is as follows. Catalyzes the conversion of D-ribulose 5-phosphate to formate and 3,4-dihydroxy-2-butanone 4-phosphate. Catalyzes the conversion of GTP to 2,5-diamino-6-ribosylamino-4(3H)-pyrimidinone 5'-phosphate (DARP), formate and pyrophosphate. This is Riboflavin biosynthesis protein RibBA from Staphylococcus saprophyticus subsp. saprophyticus (strain ATCC 15305 / DSM 20229 / NCIMB 8711 / NCTC 7292 / S-41).